A 314-amino-acid polypeptide reads, in one-letter code: Olfactory receptor 1E1 (314 aa).

Topologically, residues 1–25 (MMGQNQTSISDFLLLGLPIQPEQQN) are extracellular. Asn-5 carries N-linked (GlcNAc...) asparagine glycosylation. Residues 26–49 (LCYALFLAMYLTTLLGNLLIIVLI) form a helical membrane-spanning segment. The Cytoplasmic segment spans residues 50-57 (RLDSHLHT). The helical transmembrane segment at 58–79 (PMYLFLSNLSFSDLCFSSVTIP) threads the bilayer. Residues 80–100 (KLLQNMQNQDPSIPYADCLTQ) lie on the Extracellular side of the membrane. A helical membrane pass occupies residues 101 to 120 (MYFFLLFGDLESFLLVAMAY). Residues 121–139 (DRYVAICFPLHYTAIMSPM) lie on the Cytoplasmic side of the membrane. A helical transmembrane segment spans residues 140–158 (LCLALVALSWVLTTFHAML). Topologically, residues 159-195 (HTLLMARLCFCADNVIPHFFCDMSALLKLAFSDTRVN) are extracellular. The helical transmembrane segment at 196 to 219 (EWVIFIMGGLILVIPFLLILGSYA) threads the bilayer. The Cytoplasmic portion of the chain corresponds to 220–236 (RIVSSILKVPSSKGICK). Residues 237 to 259 (AFSTCGSHLSVVSLFYGTVIGLY) traverse the membrane as a helical segment. Residues 260–272 (LCSSANSSTLKDT) lie on the Extracellular side of the membrane. A helical transmembrane segment spans residues 273–292 (VMAMMYTVVTPMLNPFIYSL). The Cytoplasmic portion of the chain corresponds to 293–314 (RNRDMKGALSRVIHQKKTFFSL).

The protein belongs to the G-protein coupled receptor 1 family.

It localises to the cell membrane. Functionally, odorant receptor. The protein is Olfactory receptor 1E1 (OR1E1) of Homo sapiens (Human).